We begin with the raw amino-acid sequence, 357 residues long: UPF0283 membrane protein HS_0596 (357 aa).

3 helical membrane-spanning segments follow: residues leucine 67 to valine 87, isoleucine 96 to isoleucine 116, and alanine 213 to isoleucine 233.

It belongs to the UPF0283 family.

The protein resides in the cell inner membrane. This chain is UPF0283 membrane protein HS_0596, found in Histophilus somni (strain 129Pt) (Haemophilus somnus).